A 243-amino-acid chain; its full sequence is UPF0246 protein spyM18_2163 (243 aa).

Belongs to the UPF0246 family.

The protein is UPF0246 protein spyM18_2163 of Streptococcus pyogenes serotype M18 (strain MGAS8232).